The chain runs to 482 residues: Type II methyltransferase M.AvaI (482 aa).

It belongs to the N(4)/N(6)-methyltransferase family. N(4) subfamily.

It carries out the reaction a 2'-deoxycytidine in DNA + S-adenosyl-L-methionine = an N(4)-methyl-2'-deoxycytidine in DNA + S-adenosyl-L-homocysteine + H(+). An alpha subtype methylase that recognizes the double-stranded sequence 5'-CYCGRG-3', methylates C-1 on both strands, and protects the DNA from cleavage by the AvaI endonuclease. This Anabaena variabilis protein is Type II methyltransferase M.AvaI.